Here is a 244-residue protein sequence, read N- to C-terminus: Carboxy-S-adenosyl-L-methionine synthase (244 aa).

S-adenosyl-L-methionine contacts are provided by residues Tyr40, 65-67 (GCS), 90-91 (DN), 119-120 (DI), Asn134, and Arg201.

Belongs to the class I-like SAM-binding methyltransferase superfamily. Cx-SAM synthase family. In terms of assembly, homodimer.

The enzyme catalyses prephenate + S-adenosyl-L-methionine = carboxy-S-adenosyl-L-methionine + 3-phenylpyruvate + H2O. Catalyzes the conversion of S-adenosyl-L-methionine (SAM) to carboxy-S-adenosyl-L-methionine (Cx-SAM). The polypeptide is Carboxy-S-adenosyl-L-methionine synthase (Geobacter sp. (strain M21)).